A 309-amino-acid chain; its full sequence is Homoserine O-succinyltransferase (309 aa).

Cys-142 serves as the catalytic Acyl-thioester intermediate. Positions 163 and 192 each coordinate substrate. Catalysis depends on His-235, which acts as the Proton acceptor. The active site involves Glu-237. Arg-249 contacts substrate.

It belongs to the MetA family. In terms of assembly, homodimer.

It localises to the cytoplasm. The catalysed reaction is L-homoserine + succinyl-CoA = O-succinyl-L-homoserine + CoA. It participates in amino-acid biosynthesis; L-methionine biosynthesis via de novo pathway; O-succinyl-L-homoserine from L-homoserine: step 1/1. Functionally, transfers a succinyl group from succinyl-CoA to L-homoserine, forming succinyl-L-homoserine. This chain is Homoserine O-succinyltransferase, found in Escherichia fergusonii (strain ATCC 35469 / DSM 13698 / CCUG 18766 / IAM 14443 / JCM 21226 / LMG 7866 / NBRC 102419 / NCTC 12128 / CDC 0568-73).